Reading from the N-terminus, the 206-residue chain is Small ribosomal subunit protein uS3 (206 aa).

A KH type-2 domain is found at 39 to 107 (IRSYINESFK…SVEVNVVGVK (69 aa)).

The protein belongs to the universal ribosomal protein uS3 family. In terms of assembly, part of the 30S ribosomal subunit. Forms a tight complex with proteins S10 and S14.

Its function is as follows. Binds the lower part of the 30S subunit head. Binds mRNA in the 70S ribosome, positioning it for translation. This Wolbachia pipientis subsp. Culex pipiens (strain wPip) protein is Small ribosomal subunit protein uS3.